The sequence spans 255 residues: Endonuclease 8 2 (255 aa).

The active-site Schiff-base intermediate with DNA is the Pro-2. Glu-3 functions as the Proton donor in the catalytic mechanism. The Proton donor; for beta-elimination activity role is filled by Lys-51. Gln-67 and Asn-164 together coordinate DNA. The segment at Trp-221 to Arg-255 adopts an FPG-type zinc-finger fold. The Proton donor; for delta-elimination activity role is filled by Arg-245.

It belongs to the FPG family. It depends on Zn(2+) as a cofactor.

The catalysed reaction is 2'-deoxyribonucleotide-(2'-deoxyribose 5'-phosphate)-2'-deoxyribonucleotide-DNA = a 3'-end 2'-deoxyribonucleotide-(2,3-dehydro-2,3-deoxyribose 5'-phosphate)-DNA + a 5'-end 5'-phospho-2'-deoxyribonucleoside-DNA + H(+). Its function is as follows. Involved in base excision repair of DNA damaged by oxidation or by mutagenic agents. Acts as a DNA glycosylase that recognizes and removes damaged bases. Has AP (apurinic/apyrimidinic) lyase activity and introduces nicks in the DNA strand. Cleaves the DNA backbone by beta-delta elimination to generate a single-strand break at the site of the removed base with both 3'- and 5'-phosphates. The protein is Endonuclease 8 2 (nei2) of Mycobacterium bovis (strain ATCC BAA-935 / AF2122/97).